We begin with the raw amino-acid sequence, 295 residues long: 4-hydroxy-3-methylbut-2-enyl diphosphate reductase (295 aa).

Residue cysteine 12 coordinates [4Fe-4S] cluster. 2 residues coordinate (2E)-4-hydroxy-3-methylbut-2-enyl diphosphate: histidine 43 and histidine 81. Dimethylallyl diphosphate contacts are provided by histidine 43 and histidine 81. Histidine 43 and histidine 81 together coordinate isopentenyl diphosphate. Residue cysteine 103 coordinates [4Fe-4S] cluster. Histidine 131 lines the (2E)-4-hydroxy-3-methylbut-2-enyl diphosphate pocket. Residue histidine 131 coordinates dimethylallyl diphosphate. Residue histidine 131 coordinates isopentenyl diphosphate. Residue glutamate 133 is the Proton donor of the active site. Threonine 171 contacts (2E)-4-hydroxy-3-methylbut-2-enyl diphosphate. Cysteine 199 contributes to the [4Fe-4S] cluster binding site. 3 residues coordinate (2E)-4-hydroxy-3-methylbut-2-enyl diphosphate: serine 227, asparagine 229, and serine 272. Dimethylallyl diphosphate-binding residues include serine 227, asparagine 229, and serine 272. Isopentenyl diphosphate is bound by residues serine 227, asparagine 229, and serine 272.

This sequence belongs to the IspH family. The cofactor is [4Fe-4S] cluster.

It carries out the reaction isopentenyl diphosphate + 2 oxidized [2Fe-2S]-[ferredoxin] + H2O = (2E)-4-hydroxy-3-methylbut-2-enyl diphosphate + 2 reduced [2Fe-2S]-[ferredoxin] + 2 H(+). It catalyses the reaction dimethylallyl diphosphate + 2 oxidized [2Fe-2S]-[ferredoxin] + H2O = (2E)-4-hydroxy-3-methylbut-2-enyl diphosphate + 2 reduced [2Fe-2S]-[ferredoxin] + 2 H(+). The protein operates within isoprenoid biosynthesis; dimethylallyl diphosphate biosynthesis; dimethylallyl diphosphate from (2E)-4-hydroxy-3-methylbutenyl diphosphate: step 1/1. Its pathway is isoprenoid biosynthesis; isopentenyl diphosphate biosynthesis via DXP pathway; isopentenyl diphosphate from 1-deoxy-D-xylulose 5-phosphate: step 6/6. Catalyzes the conversion of 1-hydroxy-2-methyl-2-(E)-butenyl 4-diphosphate (HMBPP) into a mixture of isopentenyl diphosphate (IPP) and dimethylallyl diphosphate (DMAPP). Acts in the terminal step of the DOXP/MEP pathway for isoprenoid precursor biosynthesis. This Symbiobacterium thermophilum (strain DSM 24528 / JCM 14929 / IAM 14863 / T) protein is 4-hydroxy-3-methylbut-2-enyl diphosphate reductase.